The sequence spans 95 residues: Co-chaperonin GroES (95 aa).

The protein belongs to the GroES chaperonin family. As to quaternary structure, heptamer of 7 subunits arranged in a ring. Interacts with the chaperonin GroEL.

Its subcellular location is the cytoplasm. Functionally, together with the chaperonin GroEL, plays an essential role in assisting protein folding. The GroEL-GroES system forms a nano-cage that allows encapsulation of the non-native substrate proteins and provides a physical environment optimized to promote and accelerate protein folding. GroES binds to the apical surface of the GroEL ring, thereby capping the opening of the GroEL channel. In Bordetella bronchiseptica (strain ATCC BAA-588 / NCTC 13252 / RB50) (Alcaligenes bronchisepticus), this protein is Co-chaperonin GroES.